Here is a 440-residue protein sequence, read N- to C-terminus: Tol-Pal system protein TolB (440 aa).

An N-terminal signal peptide occupies residues 1 to 21 (MKIFGKWLLVTLLICSMPVKA).

The protein belongs to the TolB family. The Tol-Pal system is composed of five core proteins: the inner membrane proteins TolA, TolQ and TolR, the periplasmic protein TolB and the outer membrane protein Pal. They form a network linking the inner and outer membranes and the peptidoglycan layer.

It localises to the periplasm. Functionally, part of the Tol-Pal system, which plays a role in outer membrane invagination during cell division and is important for maintaining outer membrane integrity. This chain is Tol-Pal system protein TolB, found in Shewanella halifaxensis (strain HAW-EB4).